Reading from the N-terminus, the 185-residue chain is Peptide deformylase (185 aa).

Cys-94 and His-136 together coordinate Fe cation. Residue Glu-137 is part of the active site. His-140 provides a ligand contact to Fe cation.

Belongs to the polypeptide deformylase family. Fe(2+) serves as cofactor.

The enzyme catalyses N-terminal N-formyl-L-methionyl-[peptide] + H2O = N-terminal L-methionyl-[peptide] + formate. In terms of biological role, removes the formyl group from the N-terminal Met of newly synthesized proteins. Requires at least a dipeptide for an efficient rate of reaction. N-terminal L-methionine is a prerequisite for activity but the enzyme has broad specificity at other positions. In Chlorobium phaeobacteroides (strain BS1), this protein is Peptide deformylase.